A 260-amino-acid polypeptide reads, in one-letter code: Small ribosomal subunit protein uS2 (260 aa).

The segment at 225 to 260 is disordered; it reads KGQTQTEAAPNAQAAPEAAAPAEQPAEEAAAASSEG. Residues 231-260 are compositionally biased toward low complexity; it reads EAAPNAQAAPEAAAPAEQPAEEAAAASSEG.

It belongs to the universal ribosomal protein uS2 family.

The protein is Small ribosomal subunit protein uS2 of Rhodopirellula baltica (strain DSM 10527 / NCIMB 13988 / SH1).